Here is a 141-residue protein sequence, read N- to C-terminus: Putative pre-16S rRNA nuclease (141 aa).

The protein belongs to the YqgF nuclease family.

The protein localises to the cytoplasm. Functionally, could be a nuclease involved in processing of the 5'-end of pre-16S rRNA. In Coxiella burnetii (strain RSA 331 / Henzerling II), this protein is Putative pre-16S rRNA nuclease.